The sequence spans 283 residues: Nickel/cobalt efflux system RcnA (283 aa).

Residues 1–12 (MTEFTTLLQQGN) lie on the Periplasmic side of the membrane. The chain crosses the membrane as a helical span at residues 13–33 (AWFFIPSAILLGALHGLEPGH). At 34 to 56 (SKTMMAAFIIAIKGTIKQAVMLG) the chain is on the cytoplasmic side. Residues 57–77 (LAATISHTAVVWLIAFGGMVI) traverse the membrane as a helical segment. At 78–86 (SKRFTAQSA) the chain is on the periplasmic side. A helical membrane pass occupies residues 87–107 (EPWLQLISAVIIISTAFWMFW). Over 108–184 (RTWRGERNWL…DGREVTNWQI (77 aa)) the chain is Cytoplasmic. Residues 127–162 (DHEHHQDHDHDHDHDHDHEHHHHHEHGDNEEYQDAH) form a disordered region. Basic and acidic residues-rich tracts occupy residues 129 to 144 (EHHQ…DHDH) and 151 to 162 (EHGDNEEYQDAH). The helical transmembrane segment at 185–205 (LLFGLTGGLIPCPAAITVLLI) threads the bilayer. Residues 206–218 (CIQLKALTLGATL) are Periplasmic-facing. A helical transmembrane segment spans residues 219-239 (VVSFSIGLALTLVTVGVGAAI). Over 240 to 260 (SVQQVAKRWSGFNTLAKRAPY) the chain is Cytoplasmic. A helical transmembrane segment spans residues 261–281 (FSSLLIGLVGVYMGVHGFMGI). The Periplasmic portion of the chain corresponds to 282 to 283 (MR).

Belongs to the NiCoT transporter (TC 2.A.52) family. RcnA subfamily.

Its subcellular location is the cell inner membrane. In terms of biological role, efflux system for nickel and cobalt. The protein is Nickel/cobalt efflux system RcnA (rcnA) of Escherichia coli O157:H7.